A 206-amino-acid polypeptide reads, in one-letter code: FMN-dependent NADH:quinone oxidoreductase (206 aa).

FMN is bound by residues 15-17 (SVS), 94-97 (MYNF), and 138-141 (TRGG).

It belongs to the azoreductase type 1 family. As to quaternary structure, homodimer. The cofactor is FMN.

It carries out the reaction 2 a quinone + NADH + H(+) = 2 a 1,4-benzosemiquinone + NAD(+). It catalyses the reaction N,N-dimethyl-1,4-phenylenediamine + anthranilate + 2 NAD(+) = 2-(4-dimethylaminophenyl)diazenylbenzoate + 2 NADH + 2 H(+). In terms of biological role, quinone reductase that provides resistance to thiol-specific stress caused by electrophilic quinones. Functionally, also exhibits azoreductase activity. Catalyzes the reductive cleavage of the azo bond in aromatic azo compounds to the corresponding amines. The sequence is that of FMN-dependent NADH:quinone oxidoreductase from Sinorhizobium medicae (strain WSM419) (Ensifer medicae).